A 210-amino-acid chain; its full sequence is Protein-methionine-sulfoxide reductase heme-binding subunit MsrQ (210 aa).

4 consecutive transmembrane segments (helical) span residues 15–35, 89–109, 122–142, and 160–180; these read DTLV…WLAW, LFAF…DLFF, PFIT…VTST, and LVYL…KADH.

Belongs to the MsrQ family. Heterodimer of a catalytic subunit (MsrP) and a heme-binding subunit (MsrQ). FMN serves as cofactor. Heme b is required as a cofactor.

The protein localises to the cell inner membrane. Part of the MsrPQ system that repairs oxidized periplasmic proteins containing methionine sulfoxide residues (Met-O), using respiratory chain electrons. Thus protects these proteins from oxidative-stress damage caused by reactive species of oxygen and chlorine generated by the host defense mechanisms. MsrPQ is essential for the maintenance of envelope integrity under bleach stress, rescuing a wide series of structurally unrelated periplasmic proteins from methionine oxidation. MsrQ provides electrons for reduction to the reductase catalytic subunit MsrP, using the quinone pool of the respiratory chain. The chain is Protein-methionine-sulfoxide reductase heme-binding subunit MsrQ from Caulobacter vibrioides (strain ATCC 19089 / CIP 103742 / CB 15) (Caulobacter crescentus).